Reading from the N-terminus, the 361-residue chain is RLA class I histocompatibility antigen, alpha chain 19-1 (361 aa).

The N-terminal stretch at 1-24 (MGSIPPRTLLLLLAGALTLKDTQA) is a signal peptide. An alpha-1 region spans residues 25 to 114 (GSHSMRYFYT…ALRYYNQSAA (90 aa)). At 25–308 (GSHSMRYFYT…EPPAQPTALI (284 aa)) the chain is on the extracellular side. Asn110 is a glycosylation site (N-linked (GlcNAc...) asparagine). Residues 115 to 206 (GSHTFQTMFG…EMGKETLQRA (92 aa)) are alpha-2. Cystine bridges form between Cys125/Cys188 and Cys227/Cys283. Residues 207-298 (DPPKAHVTHH…GLPEPLTLTW (92 aa)) form an alpha-3 region. An Ig-like C1-type domain is found at 209–297 (PKAHVTHHPA…EGLPEPLTLT (89 aa)). The interval 299–308 (EPPAQPTALI) is connecting peptide. A helical membrane pass occupies residues 309 to 329 (VGIVAGVLGVLLILGAVVAVV). At 330–361 (RRKKHSSDGKGGRYTPAAGGHRDQGSDDSLMP) the chain is on the cytoplasmic side. A disordered region spans residues 335–361 (SSDGKGGRYTPAAGGHRDQGSDDSLMP). Phosphoserine is present on residues Ser355 and Ser358.

This sequence belongs to the MHC class I family. As to quaternary structure, heterodimer of an alpha chain and a beta chain (beta-2-microglobulin).

The protein localises to the membrane. Its function is as follows. Involved in the presentation of foreign antigens to the immune system. The chain is RLA class I histocompatibility antigen, alpha chain 19-1 from Oryctolagus cuniculus (Rabbit).